The sequence spans 698 residues: Long-chain-fatty-acid--CoA ligase 1 (698 aa).

Residue Met-1 is modified to N-acetylmethionine. 3'-nitrotyrosine is present on Tyr-9. Residue Tyr-84 is modified to Phosphotyrosine. Ser-135 carries an O-linked (GlcNAc) serine glycan. Lys-356 and Lys-386 each carry N6-acetyllysine. Phosphoserine is present on Ser-620. The residue at position 632 (Lys-632) is an N6-acetyllysine.

This sequence belongs to the ATP-dependent AMP-binding enzyme family. Requires Mg(2+) as cofactor.

The protein localises to the microsome membrane. It localises to the mitochondrion outer membrane. It is found in the peroxisome membrane. The protein resides in the endoplasmic reticulum membrane. The enzyme catalyses a long-chain fatty acid + ATP + CoA = a long-chain fatty acyl-CoA + AMP + diphosphate. The catalysed reaction is (5Z,8Z,11Z,14Z)-eicosatetraenoate + ATP + CoA = (5Z,8Z,11Z,14Z)-eicosatetraenoyl-CoA + AMP + diphosphate. It carries out the reaction 3,7,11,15-tetramethylhexadecanoate + ATP + CoA = phytanoyl-CoA + AMP + diphosphate. It catalyses the reaction hexadecanoate + ATP + CoA = hexadecanoyl-CoA + AMP + diphosphate. The enzyme catalyses (E)-hexadec-2-enoate + ATP + CoA = (2E)-hexadecenoyl-CoA + AMP + diphosphate. The catalysed reaction is 2,6,10,14-tetramethylpentadecanoate + ATP + CoA = pristanoyl-CoA + AMP + diphosphate. It carries out the reaction 14,15-epoxy-(5Z,8Z,11Z)-eicosatrienoate + ATP + CoA = 14,15-epoxy-(5Z,8Z,11Z)-eicosatrienoyl-CoA + AMP + diphosphate. It catalyses the reaction 5-hydroxy-(6E,8Z,11Z,14Z)-eicosatetraenoate + ATP + CoA = 5-hydroxy-(6E,8Z,11Z,14Z)-eicosatetraenoyl-CoA + AMP + diphosphate. The enzyme catalyses 12-hydroxy-(5Z,8Z,10E,14Z)-eicosatetraenoate + ATP + CoA = 12-hydroxy-(5Z,8Z,10E,14Z)-eicosatetraenoyl-CoA + AMP + diphosphate. The catalysed reaction is 15-hydroxy-(5Z,8Z,11Z,13E)-eicosatetraenoate + ATP + CoA = 15-hydroxy-(5Z,8Z,11Z,13E)-eicosatetraenoyl-CoA + AMP + diphosphate. It carries out the reaction (9Z)-octadecenoate + ATP + CoA = (9Z)-octadecenoyl-CoA + AMP + diphosphate. With respect to regulation, inhibited at high temperature and by arachidonate. Functionally, catalyzes the conversion of long-chain fatty acids to their active form acyl-CoAs for both synthesis of cellular lipids, and degradation via beta-oxidation. Preferentially uses palmitoleate, oleate and linoleate. Preferentially activates arachidonate than epoxyeicosatrienoic acids (EETs) or hydroxyeicosatrienoic acids (HETEs). In Cavia porcellus (Guinea pig), this protein is Long-chain-fatty-acid--CoA ligase 1.